The sequence spans 219 residues: Large ribosomal subunit protein uL16 (219 aa).

The protein belongs to the universal ribosomal protein uL16 family. As to quaternary structure, component of the small ribosomal subunit. Mature ribosomes consist of a small (40S) and a large (60S) subunit. The 40S subunit contains about 33 different proteins and 1 molecule of RNA (18S). The 60S subunit contains about 49 different proteins and 3 molecules of RNA (25S, 5.8S and 5S).

The polypeptide is Large ribosomal subunit protein uL16 (RPL10) (Solanum melongena (Eggplant)).